The primary structure comprises 449 residues: Polyadenylation factor subunit 2 (449 aa).

WD repeat units follow at residues 77-116 (KVKH…FESI), 119-158 (AHDS…VKVL), 161-200 (AHTE…QERV), 203-242 (GHHW…NVST), 245-285 (GLKH…RELQ), 288-328 (RDDM…SNST), and 337-376 (AHEK…DPNA). The disordered stretch occupies residues 411–432 (LPPANETNLGTPQPSILGSESI). Positions 415 to 432 (NETNLGTPQPSILGSESI) are enriched in polar residues.

The protein localises to the nucleus. Functionally, required for 3'-end cleavage and polyadenylation of pre-mRNAs. Also involved in chromosome segregation where it has a role in chromosome attachment to the mitotic spindle. In Eremothecium gossypii (strain ATCC 10895 / CBS 109.51 / FGSC 9923 / NRRL Y-1056) (Yeast), this protein is Polyadenylation factor subunit 2 (PSF2).